The following is a 184-amino-acid chain: Elongation factor P (184 aa).

This sequence belongs to the elongation factor P family.

It is found in the cytoplasm. It participates in protein biosynthesis; polypeptide chain elongation. In terms of biological role, involved in peptide bond synthesis. Stimulates efficient translation and peptide-bond synthesis on native or reconstituted 70S ribosomes in vitro. Probably functions indirectly by altering the affinity of the ribosome for aminoacyl-tRNA, thus increasing their reactivity as acceptors for peptidyl transferase. In Polaromonas naphthalenivorans (strain CJ2), this protein is Elongation factor P.